Here is a 127-residue protein sequence, read N- to C-terminus: uncharacterized protein (127 aa).

This is an uncharacterized protein from Haemophilus influenzae (strain ATCC 51907 / DSM 11121 / KW20 / Rd).